The following is a 103-amino-acid chain: Small ribosomal subunit protein uS10 (103 aa).

The protein belongs to the universal ribosomal protein uS10 family. As to quaternary structure, part of the 30S ribosomal subunit.

In terms of biological role, involved in the binding of tRNA to the ribosomes. This chain is Small ribosomal subunit protein uS10, found in Wigglesworthia glossinidia brevipalpis.